The following is a 637-amino-acid chain: Biosynthetic arginine decarboxylase (637 aa).

Residue Lys101 is modified to N6-(pyridoxal phosphate)lysine. Residue 286–296 (FDVGGGLAVDY) participates in substrate binding.

The protein belongs to the Orn/Lys/Arg decarboxylase class-II family. SpeA subfamily. It depends on Mg(2+) as a cofactor. The cofactor is pyridoxal 5'-phosphate.

The enzyme catalyses L-arginine + H(+) = agmatine + CO2. Its pathway is amine and polyamine biosynthesis; agmatine biosynthesis; agmatine from L-arginine: step 1/1. In terms of biological role, catalyzes the biosynthesis of agmatine from arginine. In Shewanella halifaxensis (strain HAW-EB4), this protein is Biosynthetic arginine decarboxylase.